Consider the following 474-residue polypeptide: MDRNPSPPPPGRDKEEEEEVAGGDCIGSTVYSKHWLFGVLSGLIQIVSPENTKSSSDDEEQLTELDEEMENEICRVWDMSMDEDVALFLQEFNAPDIFMGVLAKSKCPRLREICVGILGNMACFQEICVSISSDKNLGQVLLHCLYDSDPPTLLETSRLLLTCLSQAEVASVWVERIQEHPAIYDSICFIMSSSTNVDLLVKVGEVVDKLFDLDEKLMLEWVRNGAAQPLDQPQEESEEQPVFRLVPCILEAAKQVRSENPEWLDVYMHILQLLTTVDDGIQAIVHCPDTGKDIWNLLFDLVCHEFCQSDDPPIILQEQKTVLASVFSVLSAIYASQTEQEYLKIEKVDLPLIDSLIRVLQNMEQCQKKPENSAESNTEETKRTDLTQDDFHLKILKDILCEFLSNIFQALTKETVAQGVKEGQLSKQKCSSAFQNLLPFYSPVVEDFIKILREVDKALADDLEKNFPSLKVQT.

Residues 1-10 (MDRNPSPPPP) show a composition bias toward pro residues. Residues 1–21 (MDRNPSPPPPGRDKEEEEEVA) form a disordered region. Ser6 bears the Phosphoserine mark. Residue Thr387 is modified to Phosphothreonine.

This sequence belongs to the SAAL1 family. Highly expressed in testis and ovary, and to a lesser extent in the lung, spleen and the heart (at protein level).

It is found in the nucleus. Plays a role in promoting the proliferation of synovial fibroblasts in response to pro-inflammatory stimuli. This chain is Protein SAAL1 (SAAL1), found in Homo sapiens (Human).